The sequence spans 529 residues: Bifunctional purine biosynthesis protein PurH (529 aa).

Residues 1-148 form the MGS-like domain; that stretch reads MQQRRPVRRA…KNHKDVAIVV (148 aa).

This sequence belongs to the PurH family.

It catalyses the reaction (6R)-10-formyltetrahydrofolate + 5-amino-1-(5-phospho-beta-D-ribosyl)imidazole-4-carboxamide = 5-formamido-1-(5-phospho-D-ribosyl)imidazole-4-carboxamide + (6S)-5,6,7,8-tetrahydrofolate. The enzyme catalyses IMP + H2O = 5-formamido-1-(5-phospho-D-ribosyl)imidazole-4-carboxamide. It functions in the pathway purine metabolism; IMP biosynthesis via de novo pathway; 5-formamido-1-(5-phospho-D-ribosyl)imidazole-4-carboxamide from 5-amino-1-(5-phospho-D-ribosyl)imidazole-4-carboxamide (10-formyl THF route): step 1/1. Its pathway is purine metabolism; IMP biosynthesis via de novo pathway; IMP from 5-formamido-1-(5-phospho-D-ribosyl)imidazole-4-carboxamide: step 1/1. The sequence is that of Bifunctional purine biosynthesis protein PurH from Salmonella paratyphi B (strain ATCC BAA-1250 / SPB7).